The sequence spans 429 residues: Phosphomethylpyrimidine synthase (429 aa).

Residues Asn-66, Met-95, Tyr-124, His-163, 185-187 (SRG), 226-229 (DGLR), and Glu-265 each bind substrate. Residue His-269 participates in Zn(2+) binding. Tyr-292 contributes to the substrate binding site. Residue His-333 participates in Zn(2+) binding. Residues Cys-407, Cys-410, and Cys-414 each contribute to the [4Fe-4S] cluster site.

It belongs to the ThiC family. [4Fe-4S] cluster serves as cofactor.

The enzyme catalyses 5-amino-1-(5-phospho-beta-D-ribosyl)imidazole + S-adenosyl-L-methionine = 4-amino-2-methyl-5-(phosphooxymethyl)pyrimidine + CO + 5'-deoxyadenosine + formate + L-methionine + 3 H(+). It functions in the pathway cofactor biosynthesis; thiamine diphosphate biosynthesis. In terms of biological role, catalyzes the synthesis of the hydroxymethylpyrimidine phosphate (HMP-P) moiety of thiamine from aminoimidazole ribotide (AIR) in a radical S-adenosyl-L-methionine (SAM)-dependent reaction. The protein is Phosphomethylpyrimidine synthase of Pyrococcus abyssi (strain GE5 / Orsay).